Reading from the N-terminus, the 42-residue chain is Crotamine-IV-2 (42 aa).

3 disulfides stabilise this stretch: cysteine 4/cysteine 37, cysteine 11/cysteine 31, and cysteine 19/cysteine 38.

It belongs to the crotamine-myotoxin family. In terms of assembly, monomer. Expressed by the venom gland.

It is found in the secreted. In terms of biological role, cationic peptide that possesses multiple functions. It acts as a cell-penetrating peptide (CPP), and as a potent voltage-gated potassium channel (Kv) inhibitor. It exhibits antimicrobial activities, and hind limb paralysis. It also induces potent blockade of neuromuscular transmission in young chicken biventer cervicis preparation and potent myotoxic effect. In vivo, induces myonecrosis, upon intramuscular or subcutaneous injections into mice. The protein is Crotamine-IV-2 of Crotalus durissus cumanensis (South American rattlesnake).